Here is a 202-residue protein sequence, read N- to C-terminus: Protease (202 aa).

Active-site residues include His-55, Asp-72, and Cys-122.

The protein belongs to the peptidase C5 family. In terms of assembly, interacts with protease cofactor pVI-C; this interaction is necessary for protease activation.

The protein resides in the virion. It localises to the host nucleus. The catalysed reaction is Cleaves proteins of the adenovirus and its host cell at two consensus sites: -Yaa-Xaa-Gly-Gly-|-Xaa- and -Yaa-Xaa-Gly-Xaa-|-Gly- (in which Yaa is Met, Ile or Leu, and Xaa is any amino acid).. With respect to regulation, requires DNA and protease cofactor for maximal activation. Inside nascent virions, becomes partially activated by binding to the viral DNA, allowing it to cleave the cofactor that binds to the protease and fully activates it. Actin, like the viral protease cofactor, seems to act as a cofactor in the cleavage of cytokeratin 18 and of actin itself. In terms of biological role, cleaves viral precursor proteins (pTP, pIIIa, pVI, pVII, pVIII, and pX) inside newly assembled particles giving rise to mature virions. Protease complexed to its cofactor slides along the viral DNA to specifically locate and cleave the viral precursors. Mature virions have a weakened organization compared to the unmature virions, thereby facilitating subsequent uncoating. Without maturation, the particle lacks infectivity and is unable to uncoat. Late in adenovirus infection, in the cytoplasm, may participate in the cytoskeleton destruction. Cleaves host cell cytoskeletal keratins K7 and K18. This is Protease from Bovine adenovirus 7 (BAdV-7).